A 437-amino-acid chain; its full sequence is tRNA-2-methylthio-N(6)-dimethylallyladenosine synthase (437 aa).

One can recognise an MTTase N-terminal domain in the interval 1–115 (MKVYIETMGC…ISQVIHKEKA (115 aa)). C10, C46, C78, C148, C152, and C155 together coordinate [4Fe-4S] cluster. In terms of domain architecture, Radical SAM core spans 134 to 367 (KKAQIRSLLN…QNRHKEILEE (234 aa)). Positions 370 to 436 (KLEVGKTHVV…KGRLIATAKG (67 aa)) constitute a TRAM domain.

Belongs to the methylthiotransferase family. MiaB subfamily. Monomer. [4Fe-4S] cluster is required as a cofactor.

It localises to the cytoplasm. It catalyses the reaction N(6)-dimethylallyladenosine(37) in tRNA + (sulfur carrier)-SH + AH2 + 2 S-adenosyl-L-methionine = 2-methylsulfanyl-N(6)-dimethylallyladenosine(37) in tRNA + (sulfur carrier)-H + 5'-deoxyadenosine + L-methionine + A + S-adenosyl-L-homocysteine + 2 H(+). Its function is as follows. Catalyzes the methylthiolation of N6-(dimethylallyl)adenosine (i(6)A), leading to the formation of 2-methylthio-N6-(dimethylallyl)adenosine (ms(2)i(6)A) at position 37 in tRNAs that read codons beginning with uridine. In Helicobacter pylori (strain Shi470), this protein is tRNA-2-methylthio-N(6)-dimethylallyladenosine synthase.